We begin with the raw amino-acid sequence, 117 residues long: MPRVKRGVQARARHKKILKQAKGYYGARSRVYRVAFQAVTKAGQYAYRDRRTKKRQFRQLWIARINAASRQNGLSYSRFINGLKKASIEIDRKILADIAVFDKAAFSVLVEKAKAAL.

This sequence belongs to the bacterial ribosomal protein bL20 family.

Functionally, binds directly to 23S ribosomal RNA and is necessary for the in vitro assembly process of the 50S ribosomal subunit. It is not involved in the protein synthesizing functions of that subunit. The chain is Large ribosomal subunit protein bL20 from Vibrio metschnikovii.